Reading from the N-terminus, the 127-residue chain is Small ribosomal subunit protein uS11 (127 aa).

This sequence belongs to the universal ribosomal protein uS11 family. In terms of assembly, part of the 30S ribosomal subunit. Interacts with proteins S7 and S18. Binds to IF-3.

In terms of biological role, located on the platform of the 30S subunit, it bridges several disparate RNA helices of the 16S rRNA. Forms part of the Shine-Dalgarno cleft in the 70S ribosome. The sequence is that of Small ribosomal subunit protein uS11 from Nitrosococcus oceani (strain ATCC 19707 / BCRC 17464 / JCM 30415 / NCIMB 11848 / C-107).